We begin with the raw amino-acid sequence, 183 residues long: Peptidoglycan recognition protein 1 (183 aa).

Residues 1 to 17 (MLFAWAPFPALLGLADS) form the signal peptide. Cystine bridges form between Cys18-Cys142, Cys34-Cys79, and Cys55-Cys61. The N-acetylmuramoyl-L-alanine amidase domain maps to 40–168 (KPVRYVVISH…RDVQSTLSPG (129 aa)).

This sequence belongs to the N-acetylmuramoyl-L-alanine amidase 2 family. In terms of tissue distribution, expressed in all regions of the brain.

It localises to the secreted. The protein resides in the cytoplasmic granule. Its function is as follows. Innate immunity protein that plays several important functions in antimicrobial and antitumor defense systems. Acts as a pattern receptor that binds to murein peptidoglycans (PGN) of Gram-positive bacteria and thus provides bactericidal activity. Forms an equimolar complex with heat shock protein HSPA1A and induces programmed cell death through apoptosis and necroptosis in tumor cell lines by activating the TNFR1 receptor on the target cell membrane. In addition, acts in complex with the Ca(2+)-binding protein S100A4 as a chemoattractant able to induce lymphocyte movement. Mechanistically, this complex acts as a ligand of the chemotactic receptors CCR5 and CXCR3 which are present on the cells of the immune system. Promotes also the activation of lymphocytes that become able to kill virus-infected cells as well as tumor cells by modulating the spectrum of their target-cell specificity. Induction of cytotoxicity on monocyte surface requires interaction with TREM1 receptor. This chain is Peptidoglycan recognition protein 1 (Pglyrp1), found in Rattus norvegicus (Rat).